The following is a 596-amino-acid chain: Pumilio homolog 12 (596 aa).

One can recognise a PUM-HD domain in the interval 254–596; the sequence is LNEDLTMSLN…KVLSALSSKK (343 aa). 8 Pumilio repeats span residues 277-312, 313-348, 349-388, 389-424, 425-460, 461-496, 497-532, and 533-570; these read EARG…MIFN, EIID…QIVH, SITR…IIIS, ALKH…FLFE, AAIT…HLVS, EIAS…EILE, QLEG…RIIR, and ELIN…LLVD.

Its subcellular location is the cytoplasm. The protein localises to the nucleus. In terms of biological role, sequence-specific RNA-binding protein that regulates translation and mRNA stability by binding the 3'-UTR of target mRNAs. The chain is Pumilio homolog 12 (APUM12) from Arabidopsis thaliana (Mouse-ear cress).